Consider the following 297-residue polypeptide: ATP synthase F(1) complex subunit gamma, mitochondrial (297 aa).

A mitochondrion-targeting transit peptide spans 1–25 (MFSRAGVAGLSAWTLQPQWIQVRNM). N6-acetyllysine is present on K39. Position 49 is an N6-succinyllysine (K49). Residue K55 is modified to N6-acetyllysine. Residue K115 is modified to N6-acetyllysine; alternate. K115 is modified (N6-succinyllysine; alternate). S146 is subject to Phosphoserine. The residue at position 154 (K154) is an N6-acetyllysine; alternate. K154 bears the N6-succinyllysine; alternate mark. An N6-acetyllysine modification is found at K197. K270 bears the N6-succinyllysine mark.

This sequence belongs to the ATPase gamma chain family. In terms of assembly, component of the ATP synthase complex composed at least of ATP5F1A/subunit alpha, ATP5F1B/subunit beta, ATP5MC1/subunit c (homooctomer), MT-ATP6/subunit a, MT-ATP8/subunit 8, ATP5ME/subunit e, ATP5MF/subunit f, ATP5MG/subunit g, ATP5MK/subunit k, ATP5MJ/subunit j, ATP5F1C/subunit gamma, ATP5F1D/subunit delta, ATP5F1E/subunit epsilon, ATP5PF/subunit F6, ATP5PB/subunit b, ATP5PD/subunit d, ATP5PO/subunit OSCP. ATP synthase complex consists of a soluble F(1) head domain (subunits alpha(3) and beta(3)) - the catalytic core - and a membrane F(0) domain - the membrane proton channel (subunits c, a, 8, e, f, g, k and j). These two domains are linked by a central stalk (subunits gamma, delta, and epsilon) rotating inside the F1 region and a stationary peripheral stalk (subunits F6, b, d, and OSCP). Interacts with FLVCR2; this interaction occurs in the absence of heme and is disrupted upon heme binding.

The protein resides in the mitochondrion inner membrane. Its function is as follows. Subunit gamma, of the mitochondrial membrane ATP synthase complex (F(1)F(0) ATP synthase or Complex V) that produces ATP from ADP in the presence of a proton gradient across the membrane which is generated by electron transport complexes of the respiratory chain. ATP synthase complex consist of a soluble F(1) head domain - the catalytic core - and a membrane F(1) domain - the membrane proton channel. These two domains are linked by a central stalk rotating inside the F(1) region and a stationary peripheral stalk. During catalysis, ATP synthesis in the catalytic domain of F(1) is coupled via a rotary mechanism of the central stalk subunits to proton translocation. In vivo, can only synthesize ATP although its ATP hydrolase activity can be activated artificially in vitro. With the central stalk subunit delta, is essential for the biogenesis of F(1) catalytic part of the ATP synthase complex namely in the formation of F1 assembly intermediate. The protein is ATP synthase F(1) complex subunit gamma, mitochondrial of Pongo abelii (Sumatran orangutan).